The sequence spans 166 residues: NAD(P)H-quinone oxidoreductase subunit I, chloroplastic (166 aa).

4Fe-4S ferredoxin-type domains are found at residues 55–84 (GRIHFEFDKCIACEVCVRVCPIDLPVVDWK) and 95–124 (LNYSIDFGICIFCGNCVEYCPTNCLSMTEE). Residues C64, C67, C70, C74, C104, C107, C110, and C114 each contribute to the [4Fe-4S] cluster site.

It belongs to the complex I 23 kDa subunit family. NDH is composed of at least 16 different subunits, 5 of which are encoded in the nucleus. It depends on [4Fe-4S] cluster as a cofactor.

The protein resides in the plastid. The protein localises to the chloroplast thylakoid membrane. It catalyses the reaction a plastoquinone + NADH + (n+1) H(+)(in) = a plastoquinol + NAD(+) + n H(+)(out). It carries out the reaction a plastoquinone + NADPH + (n+1) H(+)(in) = a plastoquinol + NADP(+) + n H(+)(out). In terms of biological role, NDH shuttles electrons from NAD(P)H:plastoquinone, via FMN and iron-sulfur (Fe-S) centers, to quinones in the photosynthetic chain and possibly in a chloroplast respiratory chain. The immediate electron acceptor for the enzyme in this species is believed to be plastoquinone. Couples the redox reaction to proton translocation, and thus conserves the redox energy in a proton gradient. This chain is NAD(P)H-quinone oxidoreductase subunit I, chloroplastic, found in Polymnia canadensis (White-flowered leaf-cup).